The sequence spans 555 residues: CTP synthase (555 aa).

Positions 1–267 are amidoligase domain; the sequence is MAKFVFVTGG…CKEVLDCLDL (267 aa). Serine 13 is a CTP binding site. UTP is bound at residue serine 13. Residues 14–19 and aspartate 71 each bind ATP; that span reads SIGKGI. Mg(2+) contacts are provided by aspartate 71 and glutamate 141. CTP contacts are provided by residues 148–150, 188–193, and lysine 224; these read DIE and KTKPTQ. UTP contacts are provided by residues 188 to 193 and lysine 224; that span reads KTKPTQ. The Glutamine amidotransferase type-1 domain maps to 292–534; the sequence is KVALVGKYVQ…IQAAQIRVPS (243 aa). Glycine 354 contributes to the L-glutamine binding site. The Nucleophile; for glutamine hydrolysis role is filled by cysteine 381. L-glutamine-binding positions include 382 to 385, glutamate 405, and arginine 462; that span reads LGMQ. Catalysis depends on residues histidine 507 and glutamate 509. Positions 536–555 are disordered; it reads PSEAFNPQSKIIEKKSLEQQ. Residues 546 to 555 show a composition bias toward basic and acidic residues; it reads IIEKKSLEQQ.

It belongs to the CTP synthase family. Homotetramer.

It carries out the reaction UTP + L-glutamine + ATP + H2O = CTP + L-glutamate + ADP + phosphate + 2 H(+). The enzyme catalyses L-glutamine + H2O = L-glutamate + NH4(+). The catalysed reaction is UTP + NH4(+) + ATP = CTP + ADP + phosphate + 2 H(+). Its pathway is pyrimidine metabolism; CTP biosynthesis via de novo pathway; CTP from UDP: step 2/2. Allosterically activated by GTP, when glutamine is the substrate; GTP has no effect on the reaction when ammonia is the substrate. The allosteric effector GTP functions by stabilizing the protein conformation that binds the tetrahedral intermediate(s) formed during glutamine hydrolysis. Inhibited by the product CTP, via allosteric rather than competitive inhibition. Catalyzes the ATP-dependent amination of UTP to CTP with either L-glutamine or ammonia as the source of nitrogen. Regulates intracellular CTP levels through interactions with the four ribonucleotide triphosphates. The polypeptide is CTP synthase (Prochlorococcus marinus (strain NATL1A)).